The following is a 360-amino-acid chain: Membrane-bound lytic murein transglycosylase C (360 aa).

An N-terminal signal peptide occupies residues 1-16; the sequence is MKKYLALALIAPLLVS. Cys-17 carries N-palmitoyl cysteine lipidation. A lipid anchor (S-diacylglycerol cysteine) is attached at Cys-17.

Belongs to the transglycosylase Slt family.

It localises to the cell outer membrane. It catalyses the reaction Exolytic cleavage of the (1-&gt;4)-beta-glycosidic linkage between N-acetylmuramic acid (MurNAc) and N-acetylglucosamine (GlcNAc) residues in peptidoglycan, from either the reducing or the non-reducing ends of the peptidoglycan chains, with concomitant formation of a 1,6-anhydrobond in the MurNAc residue.. Murein-degrading enzyme. May play a role in recycling of muropeptides during cell elongation and/or cell division. In Klebsiella pneumoniae (strain 342), this protein is Membrane-bound lytic murein transglycosylase C.